The following is a 53-amino-acid chain: Conotoxin Cal6.23 (53 aa).

A signal peptide spans 1–22 (MKLTAVLMVAVLVLTACQLITA). Intrachain disulfides connect Cys-25/Cys-40, Cys-32/Cys-47, and Cys-39/Cys-51.

This sequence belongs to the conotoxin O1 superfamily. Expressed by the venom duct.

The protein resides in the secreted. Functionally, probable neurotoxin. This Californiconus californicus (California cone) protein is Conotoxin Cal6.23.